We begin with the raw amino-acid sequence, 191 residues long: Orotate phosphoribosyltransferase (191 aa).

114-122 (EDVITTGGS) serves as a coordination point for 5-phospho-alpha-D-ribose 1-diphosphate. Residues Thr118 and Arg146 each coordinate orotate.

This sequence belongs to the purine/pyrimidine phosphoribosyltransferase family. PyrE subfamily. As to quaternary structure, homodimer. Requires Mg(2+) as cofactor.

It carries out the reaction orotidine 5'-phosphate + diphosphate = orotate + 5-phospho-alpha-D-ribose 1-diphosphate. It functions in the pathway pyrimidine metabolism; UMP biosynthesis via de novo pathway; UMP from orotate: step 1/2. Functionally, catalyzes the transfer of a ribosyl phosphate group from 5-phosphoribose 1-diphosphate to orotate, leading to the formation of orotidine monophosphate (OMP). The protein is Orotate phosphoribosyltransferase of Desulforamulus reducens (strain ATCC BAA-1160 / DSM 100696 / MI-1) (Desulfotomaculum reducens).